A 460-amino-acid chain; its full sequence is tRNA(Ile)-lysidine synthase (460 aa).

Residue 30 to 35 (SGGLDS) coordinates ATP.

The protein belongs to the tRNA(Ile)-lysidine synthase family.

It is found in the cytoplasm. It catalyses the reaction cytidine(34) in tRNA(Ile2) + L-lysine + ATP = lysidine(34) in tRNA(Ile2) + AMP + diphosphate + H(+). In terms of biological role, ligates lysine onto the cytidine present at position 34 of the AUA codon-specific tRNA(Ile) that contains the anticodon CAU, in an ATP-dependent manner. Cytidine is converted to lysidine, thus changing the amino acid specificity of the tRNA from methionine to isoleucine. This is tRNA(Ile)-lysidine synthase from Yersinia pestis.